The primary structure comprises 327 residues: DNA polymerase III subunit delta' (327 aa).

DNA polymerase III contains a core (composed of alpha, epsilon and theta chains) that associates with a tau subunit. This core dimerizes to form the POLIII' complex. PolIII' associates with the gamma complex (composed of gamma, delta, delta', psi and chi chains) and with the beta chain to form the complete DNA polymerase III complex.

The enzyme catalyses DNA(n) + a 2'-deoxyribonucleoside 5'-triphosphate = DNA(n+1) + diphosphate. Its function is as follows. DNA polymerase III is a complex, multichain enzyme responsible for most of the replicative synthesis in bacteria. This DNA polymerase also exhibits 3' to 5' exonuclease activity. This Haemophilus influenzae (strain ATCC 51907 / DSM 11121 / KW20 / Rd) protein is DNA polymerase III subunit delta' (holB).